The sequence spans 78 residues: Large ribosomal subunit protein bL28 (78 aa).

This sequence belongs to the bacterial ribosomal protein bL28 family.

The chain is Large ribosomal subunit protein bL28 from Escherichia coli O139:H28 (strain E24377A / ETEC).